The primary structure comprises 183 residues: MASPSKRREMDMMKLMMSDYKVDTVNDDLQMFYVTFHGPTDSLYQGGVWKIKVELPEAYPYKSPSVGFVNKIYHPNVDESSGAVCLDVINQTWSPMFDLINVFESFLPQLLLYPNPSDPFNGEAASLLMRDRAAYELKVKEYCEKYAKPEEILSDDDDDDSMSEDGSDSDDDDDDEIVGKADP.

The UBC core domain maps to 1–148; that stretch reads MASPSKRREM…VKEYCEKYAK (148 aa). Residue cysteine 85 is the Glycyl thioester intermediate of the active site. The interval 148–183 is disordered; it reads KPEEILSDDDDDDSMSEDGSDSDDDDDDEIVGKADP. Residues 152-176 are compositionally biased toward acidic residues; it reads ILSDDDDDDSMSEDGSDSDDDDDDE.

Belongs to the ubiquitin-conjugating enzyme family. As to expression, expressed in roots, petals, sepals and silique walls.

It catalyses the reaction S-ubiquitinyl-[E1 ubiquitin-activating enzyme]-L-cysteine + [E2 ubiquitin-conjugating enzyme]-L-cysteine = [E1 ubiquitin-activating enzyme]-L-cysteine + S-ubiquitinyl-[E2 ubiquitin-conjugating enzyme]-L-cysteine.. The protein operates within protein modification; protein ubiquitination. Its function is as follows. Accepts the ubiquitin from the E1 complex and catalyzes its covalent attachment to other proteins. The sequence is that of Ubiquitin-conjugating enzyme E2 6 (UBC6) from Arabidopsis thaliana (Mouse-ear cress).